We begin with the raw amino-acid sequence, 284 residues long: MIKKFLSSKESKYVTISLDDNFKKNSVDDKFWTYCKGCDSHVFRKDIEENSFVCPKCSRHYGLRARKRINLLIDKGTFMEFNSDVEFQNPLNFPKYKEKVDSYKEKTKESEAVVTGYGRINGIKTVICVMNPDFMMGSMGSIVGEKITYSIEYAAENNLPIIICSASGGARMQEGMVSLMQMAKTSQALSKLEEKSLPYISVLTDPTTGGVTASFAMLGDIIISEPNTLIGFAGPRVIEQTINQKLPEGFQTSEFLLEKGFIDMIVDRRKMKEVLYQILAMHKK.

Residues Phe-31 to Lys-284 form the CoA carboxyltransferase N-terminal domain. Cys-35, Cys-38, Cys-54, and Cys-57 together coordinate Zn(2+). A C4-type zinc finger spans residues Cys-35–Cys-57.

Belongs to the AccD/PCCB family. As to quaternary structure, acetyl-CoA carboxylase is a heterohexamer composed of biotin carboxyl carrier protein (AccB), biotin carboxylase (AccC) and two subunits each of ACCase subunit alpha (AccA) and ACCase subunit beta (AccD). Zn(2+) is required as a cofactor.

It is found in the cytoplasm. It catalyses the reaction N(6)-carboxybiotinyl-L-lysyl-[protein] + acetyl-CoA = N(6)-biotinyl-L-lysyl-[protein] + malonyl-CoA. It functions in the pathway lipid metabolism; malonyl-CoA biosynthesis; malonyl-CoA from acetyl-CoA: step 1/1. Functionally, component of the acetyl coenzyme A carboxylase (ACC) complex. Biotin carboxylase (BC) catalyzes the carboxylation of biotin on its carrier protein (BCCP) and then the CO(2) group is transferred by the transcarboxylase to acetyl-CoA to form malonyl-CoA. In Clostridioides difficile (strain 630) (Peptoclostridium difficile), this protein is Acetyl-coenzyme A carboxylase carboxyl transferase subunit beta.